The primary structure comprises 42 residues: uncharacterized protein (42 aa).

The helical transmembrane segment at 5–27 threads the bilayer; that stretch reads FLHTNITIIPHSVLYVSLSYYII.

It localises to the membrane. This is an uncharacterized protein from Saccharomyces cerevisiae (strain ATCC 204508 / S288c) (Baker's yeast).